The chain runs to 133 residues: Protein NrdI (133 aa).

This sequence belongs to the NrdI family.

Functionally, probably involved in ribonucleotide reductase function. In Escherichia coli O17:K52:H18 (strain UMN026 / ExPEC), this protein is Protein NrdI.